The chain runs to 334 residues: Fructose-1,6-bisphosphatase class 1 (334 aa).

Mg(2+)-binding residues include Glu91, Asp113, Leu115, and Asp116. Substrate is bound by residues 116 to 119, Asn208, and Lys274; that span reads DGSS. Glu280 is a binding site for Mg(2+).

The protein belongs to the FBPase class 1 family. In terms of assembly, homotetramer. Mg(2+) is required as a cofactor.

It localises to the cytoplasm. The catalysed reaction is beta-D-fructose 1,6-bisphosphate + H2O = beta-D-fructose 6-phosphate + phosphate. Its pathway is carbohydrate biosynthesis; gluconeogenesis. In Herminiimonas arsenicoxydans, this protein is Fructose-1,6-bisphosphatase class 1.